Consider the following 183-residue polypeptide: Gamma-crystallin N-A (183 aa).

Beta/gamma crystallin 'Greek key' domains are found at residues 6–46 (GKIV…RVES), 47–89 (GAWV…KPIK), 95–136 (YRME…KVYG), and 138–180 (GAWA…RRVV).

The protein belongs to the beta/gamma-crystallin family. Monomer.

Its function is as follows. Crystallins are the dominant structural components of the vertebrate eye lens. The protein is Gamma-crystallin N-A (crygna) of Danio rerio (Zebrafish).